Consider the following 249-residue polypeptide: MGKLTLGHRGEASEPDFFRGVLGELVLTFLFVFIGVGAAMTDGATTKGSTAGGDLTAVALGQALVVAVIATAGFHISGGHVNPAVTLSLAVGGHVTLFRSSLYIAAQMLASSAACFLLRWLTGGLATPVHALAEGVGPLQGVVAEAVFTFSLLFVIYATILDPRKLLPGAGPLLTGLLVGANSVAGAALSGASMNPARSFGPAVASGVWTHHWVYWVGPLAGGPLAVLVYECCFMAAAPTHDLLPQQDP.

Helical transmembrane passes span 20-40 and 56-76; these read GVLG…GAAM and TAVA…GFHI. Positions 82–84 match the NPA 1 motif; it reads NPA. Transmembrane regions (helical) follow at residues 100-122, 141-161, and 169-189; these read SSLY…RWLT, GVVA…ATIL, and GAGP…GAAL. The short motif at 195–197 is the NPA 2 element; the sequence is NPA. The helical transmembrane segment at 214–234 threads the bilayer; the sequence is VYWVGPLAGGPLAVLVYECCF.

Belongs to the MIP/aquaporin (TC 1.A.8) family. TIP (TC 1.A.8.10) subfamily.

It localises to the vacuole membrane. Its function is as follows. Aquaporins facilitate the transport of water and small neutral solutes across cell membranes. In Zea mays (Maize), this protein is Aquaporin TIP4-3 (TIP4-3).